The following is a 543-amino-acid chain: Protein MGF 505-10R (543 aa).

The protein belongs to the asfivirus MGF 505 family.

Plays a role in virus cell tropism, and may be required for efficient virus replication in macrophages. This Ornithodoros (relapsing fever ticks) protein is Protein MGF 505-10R.